A 193-amino-acid polypeptide reads, in one-letter code: Probable gluconokinase (193 aa).

18–25 (GTAGTGKS) provides a ligand contact to ATP.

Belongs to the gluconokinase GntK/GntV family.

It is found in the cytoplasm. The enzyme catalyses D-gluconate + ATP = 6-phospho-D-gluconate + ADP + H(+). It functions in the pathway carbohydrate acid metabolism; D-gluconate degradation. This chain is Probable gluconokinase, found in Saccharomyces cerevisiae (strain ATCC 204508 / S288c) (Baker's yeast).